A 570-amino-acid polypeptide reads, in one-letter code: Pleckstrin homology domain-containing family D member 1 (570 aa).

The span at 1–13 (MTTKTTPKELKAK) shows a compositional bias: basic and acidic residues. Residues 1–42 (MTTKTTPKELKAKKESKKKGSAPEPPKNGPPRTSPPNTIEKK) are disordered. The segment covering 23–34 (PEPPKNGPPRTS) has biased composition (pro residues). In terms of domain architecture, PH spans 83–192 (GVQNYGILMK…WLKALRSATK (110 aa)). A coiled-coil region spans residues 202 to 448 (ETMIRELENR…TGAQMTELQE (247 aa)). Basic residues predominate over residues 542–551 (SKRGIRSSFR). The interval 542-570 (SKRGIRSSFRKKTDSITTQPREKEPLMQL) is disordered. Residues 561–570 (PREKEPLMQL) show a composition bias toward basic and acidic residues.

This sequence belongs to the PLEKHD1 family.

The protein is Pleckstrin homology domain-containing family D member 1 of Caenorhabditis elegans.